The sequence spans 229 residues: Small ribosomal subunit protein uS3c (229 aa).

Positions 39 to 128 constitute a KH type-2 domain; the sequence is LRDNLFKQYP…RIILTILKVQ (90 aa).

This sequence belongs to the universal ribosomal protein uS3 family. In terms of assembly, part of the 30S ribosomal subunit.

It is found in the plastid. Its subcellular location is the chloroplast. The polypeptide is Small ribosomal subunit protein uS3c (rps3) (Tupiella akineta (Green alga)).